The sequence spans 514 residues: Peptide chain release factor 3 (514 aa).

Positions 8 to 268 (KKRRTFAIIS…TFLKFAPEPH (261 aa)) constitute a tr-type G domain. GTP-binding positions include 17-24 (SHPDAGKT), 85-89 (DTPGH), and 139-142 (NKLD).

It belongs to the TRAFAC class translation factor GTPase superfamily. Classic translation factor GTPase family. PrfC subfamily.

Its subcellular location is the cytoplasm. Its function is as follows. Increases the formation of ribosomal termination complexes and stimulates activities of RF-1 and RF-2. It binds guanine nucleotides and has strong preference for UGA stop codons. It may interact directly with the ribosome. The stimulation of RF-1 and RF-2 is significantly reduced by GTP and GDP, but not by GMP. This chain is Peptide chain release factor 3, found in Streptococcus thermophilus (strain ATCC BAA-491 / LMD-9).